The sequence spans 147 residues: Protein phosphatase 1 regulatory subunit 14B (147 aa).

The interval 1–55 (MADSGTAGGAALAAPAPGPGSGGPGPRVYFQSPPGAAGEGPGGADDEGPVRRQGK) is disordered. Ala2 is subject to N-acetylalanine. Ser21 is modified (phosphoserine). Residue Tyr29 is modified to Phosphotyrosine. A Phosphoserine modification is found at Ser32. Thr57 is subject to Phosphothreonine. The stretch at 61 to 103 (DRKELRKRLNLEEWILEQLTRLYDCQEEEIPELEIDVDELLDM) forms a coiled coil.

The protein belongs to the PP1 inhibitor family. Phosphorylated primarily on Thr-57 by PKC (in vitro). An unknown Ser is also phosphorylated by PKC (in vitro). As to expression, ubiquitous. Expressed at low levels.

The protein resides in the cytoplasm. In terms of biological role, inhibitor of PPP1CA. Has over 50-fold higher inhibitory activity when phosphorylated. This is Protein phosphatase 1 regulatory subunit 14B (PPP1R14B) from Homo sapiens (Human).